The following is a 436-amino-acid chain: 23S rRNA (uracil(1939)-C(5))-methyltransferase RlmD (436 aa).

A TRAM domain is found at 10-68; it reads KQKTTQKIVAEIQDLDYQGLGVAKIQGKTWFIENALPTEKVEAVVTDEKRQYGLATAQK. [4Fe-4S] cluster-binding residues include Cys-81, Cys-87, Cys-90, and Cys-168. Positions 270, 299, 304, 320, 347, and 368 each coordinate S-adenosyl-L-methionine. Cys-394 functions as the Nucleophile in the catalytic mechanism.

The protein belongs to the class I-like SAM-binding methyltransferase superfamily. RNA M5U methyltransferase family. RlmD subfamily.

It catalyses the reaction uridine(1939) in 23S rRNA + S-adenosyl-L-methionine = 5-methyluridine(1939) in 23S rRNA + S-adenosyl-L-homocysteine + H(+). Its function is as follows. Catalyzes the formation of 5-methyl-uridine at position 1939 (m5U1939) in 23S rRNA. The sequence is that of 23S rRNA (uracil(1939)-C(5))-methyltransferase RlmD from Haemophilus parainfluenzae (strain T3T1).